The chain runs to 439 residues: UPF0597 protein Dalk_4447 (439 aa).

Belongs to the UPF0597 family.

The chain is UPF0597 protein Dalk_4447 from Desulfatibacillum aliphaticivorans.